A 239-amino-acid chain; its full sequence is MDIKLKDFEGPLDLLLHLVSKYQVDIYEVPITEVIEQYLAYIATLQAMRLEVAGEYMLMASQLMVIKSRRLLPKVVEQIDPEDDPEMDLLDQLEEYRKFKLLSEKLGEQHDERANYFSKPKLDLIYDDVQLAKDKTVIDIFLAFSKVMAEKQASLRQSHATIARDEYKIEDMMDFVRSRFETGPRLELRQLFQESQDVNEMITIFLATLELVKVHEIVLEQTETFGDIYLVRSEDESLS.

It belongs to the ScpA family. As to quaternary structure, component of a cohesin-like complex composed of ScpA, ScpB and the Smc homodimer, in which ScpA and ScpB bind to the head domain of Smc. The presence of the three proteins is required for the association of the complex with DNA.

The protein resides in the cytoplasm. Functionally, participates in chromosomal partition during cell division. May act via the formation of a condensin-like complex containing Smc and ScpB that pull DNA away from mid-cell into both cell halves. The polypeptide is Segregation and condensation protein A (Streptococcus suis (strain 98HAH33)).